The primary structure comprises 1123 residues: Ubiquitin carboxyl-terminal hydrolase 43 (1123 aa).

A disordered region spans residues 1–102 (MDLGPGDAAG…DGARPPGAQG (102 aa)). Residues 17–28 (RPRRRRSLRRLF) are compositionally biased toward basic residues. Over residues 29-39 (SRFLLALGSRS) the composition is skewed to low complexity. Residues 101-710 (QGLKNHGNTC…GAYILFYQKR (610 aa)) enclose the USP domain. The active-site Nucleophile is Cys110. The disordered stretch occupies residues 202 to 221 (EGSSRGPVSEKLPPEATKTS). His668 acts as the Proton acceptor in catalysis. Arg746 is subject to Asymmetric dimethylarginine. Disordered regions lie at residues 795–826 (ISMK…EKPP), 854–886 (TGTA…IERG), 959–1049 (FQMG…RIPE), and 1068–1099 (SSLR…QASY). Ser969 bears the Phosphoserine mark. The segment covering 979 to 990 (KDSRRGTSELDR) has biased composition (basic and acidic residues). The segment covering 1016–1027 (VSPQVPPVSLVS) has biased composition (low complexity). At Ser1041 the chain carries Phosphoserine.

The protein belongs to the peptidase C19 family. As to expression, expressed in brain, aorta and lung at low levels.

The enzyme catalyses Thiol-dependent hydrolysis of ester, thioester, amide, peptide and isopeptide bonds formed by the C-terminal Gly of ubiquitin (a 76-residue protein attached to proteins as an intracellular targeting signal).. Its function is as follows. May recognize and hydrolyze the peptide bond at the C-terminal Gly of ubiquitin. Involved in the processing of poly-ubiquitin precursors as well as that of ubiquitinated proteins. The sequence is that of Ubiquitin carboxyl-terminal hydrolase 43 (USP43) from Homo sapiens (Human).